The sequence spans 385 residues: uncharacterized protein (385 aa).

It belongs to the phage portal family. HK97 subfamily.

This is an uncharacterized protein from Rickettsia bellii (strain RML369-C).